Reading from the N-terminus, the 359-residue chain is Peptide chain release factor 1 (359 aa).

An N5-methylglutamine modification is found at Q235.

The protein belongs to the prokaryotic/mitochondrial release factor family. In terms of processing, methylated by PrmC. Methylation increases the termination efficiency of RF1.

Its subcellular location is the cytoplasm. Functionally, peptide chain release factor 1 directs the termination of translation in response to the peptide chain termination codons UAG and UAA. In Methylibium petroleiphilum (strain ATCC BAA-1232 / LMG 22953 / PM1), this protein is Peptide chain release factor 1.